We begin with the raw amino-acid sequence, 240 residues long: ICKRNLDIERPSYTNLNRLISQVVSSITASLRFDGALNVDLTEFQTNLVPYPRIHFPLVTYAPIISAEKAYHEQLAVAEVTSACFEPANQMVKCDPRHGKYMACCMLYRGDVVPKDVNAAIATIKTKRSIQFVDWCPTGFKVGINYQPPTVVLGGDLAKVQRAVCMLSNTTAVAEAWARLDHKFDLMYAKRAFVHWYVGEGMEEGEFSEAREDLAALEKDYEEVGLDTFEAEEEEGGDEY.

Asparagine 17 provides a ligand contact to GTP. Glutamate 43 is an active-site residue.

Belongs to the tubulin family. Dimer of alpha and beta chains. A typical microtubule is a hollow water-filled tube with an outer diameter of 25 nm and an inner diameter of 15 nM. Alpha-beta heterodimers associate head-to-tail to form protofilaments running lengthwise along the microtubule wall with the beta-tubulin subunit facing the microtubule plus end conferring a structural polarity. Microtubules usually have 13 protofilaments but different protofilament numbers can be found in some organisms and specialized cells. It depends on Mg(2+) as a cofactor. Post-translationally, undergoes a tyrosination/detyrosination cycle, the cyclic removal and re-addition of a C-terminal tyrosine residue by the enzymes tubulin tyrosine carboxypeptidase (TTCP) and tubulin tyrosine ligase (TTL), respectively.

Its subcellular location is the cytoplasm. It localises to the cytoskeleton. It catalyses the reaction GTP + H2O = GDP + phosphate + H(+). Its function is as follows. Tubulin is the major constituent of microtubules, a cylinder consisting of laterally associated linear protofilaments composed of alpha- and beta-tubulin heterodimers. Microtubules grow by the addition of GTP-tubulin dimers to the microtubule end, where a stabilizing cap forms. Below the cap, tubulin dimers are in GDP-bound state, owing to GTPase activity of alpha-tubulin. The sequence is that of Tubulin alpha chain from Octopus vulgaris (Common octopus).